Reading from the N-terminus, the 199-residue chain is Large ribosomal subunit protein bL9 (199 aa).

The segment covering 149–166 (AEAERINRGEDINSRQED) has biased composition (basic and acidic residues). Residues 149 to 199 (AEAERINRGEDINSRQEDQDAAAEAIAAAGEFFDPEAQDETPETEAASEQQ) form a disordered region. Residues 181–191 (FDPEAQDETPE) are compositionally biased toward acidic residues.

The protein belongs to the bacterial ribosomal protein bL9 family.

Its function is as follows. Binds to the 23S rRNA. The polypeptide is Large ribosomal subunit protein bL9 (Afipia carboxidovorans (strain ATCC 49405 / DSM 1227 / KCTC 32145 / OM5) (Oligotropha carboxidovorans)).